We begin with the raw amino-acid sequence, 252 residues long: MDTVKIDTRDVNFWYGDFHALKGISMQIEEKSVVAFIGPSGCGKSTFLRLFNRMNDLIPATRLEGEIRIDGHNIYAKGVEVDELRKNVGMVFQRPNPFPKSIFENVAYGLRVNGVKDNAFIRQRVEETLKGAALWDEVKDKLKESAYALSGGQQQRLCIARAMAVSPSVLLMDEPASALDPISTAKVEELIHELKKDYTIVIVTHNMQQAARVSDKTAFFYLGEMVEYDDTKKIFTNPEKEATQNYITGRFG.

Positions 6–247 (IDTRDVNFWY…PEKEATQNYI (242 aa)) constitute an ABC transporter domain. Position 38–45 (38–45 (GPSGCGKS)) interacts with ATP.

Belongs to the ABC transporter superfamily. Phosphate importer (TC 3.A.1.7) family. As to quaternary structure, the complex is composed of two ATP-binding proteins (PstB), two transmembrane proteins (PstC and PstA) and a solute-binding protein (PstS).

The protein localises to the cell inner membrane. It carries out the reaction phosphate(out) + ATP + H2O = ADP + 2 phosphate(in) + H(+). Part of the ABC transporter complex PstSACB involved in phosphate import. Responsible for energy coupling to the transport system. The protein is Phosphate import ATP-binding protein PstB of Bacteroides thetaiotaomicron (strain ATCC 29148 / DSM 2079 / JCM 5827 / CCUG 10774 / NCTC 10582 / VPI-5482 / E50).